Consider the following 415-residue polypeptide: ATP-dependent RNA helicase RhlB (415 aa).

The Q motif motif lies at 9–37 (QRFSALPLHPIVRGALAKKGFDFCTPIQA). In terms of domain architecture, Helicase ATP-binding spans 40 to 218 (LPISLNGRDV…FEDMNEPEYI (179 aa)). 53 to 60 (AQTGTGKT) is an ATP binding site. The DEAD box motif lies at 164-167 (DEAD). A Helicase C-terminal domain is found at 241–389 (DKMALLLTLM…VSQYETEALL (149 aa)).

It belongs to the DEAD box helicase family. RhlB subfamily. Component of the RNA degradosome, which is a multiprotein complex involved in RNA processing and mRNA degradation.

Its subcellular location is the cytoplasm. The enzyme catalyses ATP + H2O = ADP + phosphate + H(+). Its function is as follows. DEAD-box RNA helicase involved in RNA degradation. Has RNA-dependent ATPase activity and unwinds double-stranded RNA. The sequence is that of ATP-dependent RNA helicase RhlB from Haemophilus influenzae (strain ATCC 51907 / DSM 11121 / KW20 / Rd).